The chain runs to 425 residues: Glutamyl-tRNA reductase (425 aa).

Substrate-binding positions include 49–52, Ser-109, 114–116, and Gln-120; these read TCNR and EGQ. The active-site Nucleophile is the Cys-50. 189–194 serves as a coordination point for NADP(+); it reads GAGETG.

The protein belongs to the glutamyl-tRNA reductase family. Homodimer.

The catalysed reaction is (S)-4-amino-5-oxopentanoate + tRNA(Glu) + NADP(+) = L-glutamyl-tRNA(Glu) + NADPH + H(+). It participates in porphyrin-containing compound metabolism; protoporphyrin-IX biosynthesis; 5-aminolevulinate from L-glutamyl-tRNA(Glu): step 1/2. The protein operates within porphyrin-containing compound metabolism; chlorophyll biosynthesis. In terms of biological role, catalyzes the NADPH-dependent reduction of glutamyl-tRNA(Glu) to glutamate 1-semialdehyde (GSA). In Pelodictyon phaeoclathratiforme (strain DSM 5477 / BU-1), this protein is Glutamyl-tRNA reductase.